The chain runs to 321 residues: Calcium-binding protein LPS1-alpha (321 aa).

EF-hand domains lie at 15 to 49, 47 to 82, 85 to 120, 121 to 156, 165 to 200, 200 to 233, 232 to 267, and 269 to 304; these read DAIE…NWTE, WTEE…STKE, YSSD…IYTK, VVDG…KLPI, EYRE…STKY, YSDK…DGVS, VSKD…IYRQ, and VDFE…NCPY. Ca(2+)-binding residues include aspartate 29, asparagine 31, aspartate 33, threonine 35, glutamate 40, aspartate 60, asparagine 62, aspartate 64, histidine 66, glutamate 71, aspartate 98, aspartate 100, asparagine 102, arginine 104, glutamate 109, aspartate 134, aspartate 136, aspartate 138, histidine 140, glutamate 145, aspartate 178, asparagine 180, aspartate 182, serine 184, glutamate 189, aspartate 213, asparagine 215, aspartate 217, arginine 219, glutamate 224, aspartate 245, aspartate 247, asparagine 249, lysine 251, glutamate 256, aspartate 284, aspartate 286, tyrosine 288, and glutamate 293.

As to expression, aboral ectoderm, a squamous epithelium covering the surface of the late stage embryo and larva.

Its function is as follows. Calcium-binding protein involved in larval development and metamorphosis. Likely to function as calcium buffers mediating the transport of calcium from the sea water to the blastocoel where calcium is required for skeleton formation. This chain is Calcium-binding protein LPS1-alpha, found in Lytechinus pictus (Painted sea urchin).